The following is a 306-amino-acid chain: Methionyl-tRNA formyltransferase (306 aa).

Ser108–Pro111 provides a ligand contact to (6S)-5,6,7,8-tetrahydrofolate.

Belongs to the Fmt family.

It carries out the reaction L-methionyl-tRNA(fMet) + (6R)-10-formyltetrahydrofolate = N-formyl-L-methionyl-tRNA(fMet) + (6S)-5,6,7,8-tetrahydrofolate + H(+). Functionally, attaches a formyl group to the free amino group of methionyl-tRNA(fMet). The formyl group appears to play a dual role in the initiator identity of N-formylmethionyl-tRNA by promoting its recognition by IF2 and preventing the misappropriation of this tRNA by the elongation apparatus. The chain is Methionyl-tRNA formyltransferase from Pseudarthrobacter chlorophenolicus (strain ATCC 700700 / DSM 12829 / CIP 107037 / JCM 12360 / KCTC 9906 / NCIMB 13794 / A6) (Arthrobacter chlorophenolicus).